Reading from the N-terminus, the 483-residue chain is NADH-quinone oxidoreductase subunit N (483 aa).

Helical transmembrane passes span 7-27 (AILTPEIVLSLFAMAGLLGAV), 33-53 (ALASAMCWGTAALFIIMAFYI), 76-96 (FAKITILLSAAAILMISQDYM), 108-128 (VLIILAVVGMMIMVSAGDLIA), 161-181 (FVLGALSSGLLLYGSSLAYGF), 196-216 (GGDMPLGLLFGLVFITAGLAF), 235-255 (PTPITALFATAPKVAAMALFA), 272-292 (IVAFLAVVSMFLGAIAAIGQT), 297-317 (LMAYSSISHMGFALMGLSAGT), 323-343 (AMLIYMAIYVAMNIGTFAFIL), 369-389 (ALAILVMMFSLAGVPPLLGFF), 402-422 (GLVWLAIAGVIASVIGAFYYI), and 442-462 (MGLVPYVGLIAMALVIGLGWV).

The protein belongs to the complex I subunit 2 family. NDH-1 is composed of 14 different subunits. Subunits NuoA, H, J, K, L, M, N constitute the membrane sector of the complex.

The protein resides in the cell inner membrane. The catalysed reaction is a quinone + NADH + 5 H(+)(in) = a quinol + NAD(+) + 4 H(+)(out). Functionally, NDH-1 shuttles electrons from NADH, via FMN and iron-sulfur (Fe-S) centers, to quinones in the respiratory chain. The immediate electron acceptor for the enzyme in this species is believed to be ubiquinone. Couples the redox reaction to proton translocation (for every two electrons transferred, four hydrogen ions are translocated across the cytoplasmic membrane), and thus conserves the redox energy in a proton gradient. This Jannaschia sp. (strain CCS1) protein is NADH-quinone oxidoreductase subunit N.